We begin with the raw amino-acid sequence, 353 residues long: Carbamoyl phosphate synthase small chain (353 aa).

A CPSase region spans residues 1 to 166; it reads MSDAYLALET…AETHGNGDTT (166 aa). Ser-45, Gly-214, and Gly-216 together coordinate L-glutamine. The Glutamine amidotransferase type-1 domain occupies 166–349; that stretch reads TVALVDCGAK…LAMADASYTP (184 aa). Cys-241 (nucleophile) is an active-site residue. L-glutamine contacts are provided by Leu-242, Gln-245, Asn-283, Gly-285, and Tyr-286. Catalysis depends on residues His-322 and Glu-324.

This sequence belongs to the CarA family. Composed of two chains; the small (or glutamine) chain promotes the hydrolysis of glutamine to ammonia, which is used by the large (or ammonia) chain to synthesize carbamoyl phosphate. Tetramer of heterodimers (alpha,beta)4.

It catalyses the reaction hydrogencarbonate + L-glutamine + 2 ATP + H2O = carbamoyl phosphate + L-glutamate + 2 ADP + phosphate + 2 H(+). The catalysed reaction is L-glutamine + H2O = L-glutamate + NH4(+). Its pathway is amino-acid biosynthesis; L-arginine biosynthesis; carbamoyl phosphate from bicarbonate: step 1/1. It participates in pyrimidine metabolism; UMP biosynthesis via de novo pathway; (S)-dihydroorotate from bicarbonate: step 1/3. Its function is as follows. Small subunit of the glutamine-dependent carbamoyl phosphate synthetase (CPSase). CPSase catalyzes the formation of carbamoyl phosphate from the ammonia moiety of glutamine, carbonate, and phosphate donated by ATP, constituting the first step of 2 biosynthetic pathways, one leading to arginine and/or urea and the other to pyrimidine nucleotides. The small subunit (glutamine amidotransferase) binds and cleaves glutamine to supply the large subunit with the substrate ammonia. The protein is Carbamoyl phosphate synthase small chain of Halobacterium salinarum (strain ATCC 29341 / DSM 671 / R1).